An 85-amino-acid polypeptide reads, in one-letter code: Probable dolichol-phosphate mannosyltransferase subunit 3 (85 aa).

A run of 2 helical transmembrane segments spans residues Val13 to Ile33 and Ala37 to Phe57.

This sequence belongs to the DPM3 family.

It localises to the endoplasmic reticulum membrane. Its pathway is protein modification; protein glycosylation. In terms of biological role, stabilizer subunit of the dolichol-phosphate-mannose synthase complex. This Caenorhabditis briggsae protein is Probable dolichol-phosphate mannosyltransferase subunit 3.